Consider the following 564-residue polypeptide: uncharacterized protein (564 aa).

The N-terminal stretch at 1–21 (MRRIGAITALSLPVLLSLLYS) is a signal peptide. C22 carries the N-palmitoyl cysteine lipid modification. Residue C22 is the site of S-diacylglycerol cysteine attachment.

The protein resides in the cell membrane. This is an uncharacterized protein from Aquifex aeolicus (strain VF5).